Consider the following 391-residue polypeptide: MKGRFGRFGGQYVPETVMNALIELEREFEEAKKDEKFMEEYRYYLKEYSGRPTPLYYAENLTKRLGGAKIYLKREDLNHTGAHKINNVLGQVLLAKRMGKKRIIAETGAGQHGVATATAAAMFGMECEIFMGEEDIKRQALNVFRMKLLGAKVTAVTSGTRTLKDAVNEAIRDWVTNIETTFYVIGSVVGPHPYPTMVRDFQRVIGDETKEQILEKEGRLPDYVVACVGGGSNAMGIFYPFIEDKGVKLVGVEAAGEGIETGKHASAMAKGSVGVLHGMMTYLLQDEEGKILPVHSISAGLDYPGVGPEHAYLKEIGRAEYVYATDEEALAAFMDLSRTEGIIPALESAHALAYAMKLAKKLDEDKIIVVNLSGRGDKDVNTVAKVMGVEL.

At K84 the chain carries N6-(pyridoxal phosphate)lysine.

Belongs to the TrpB family. As to quaternary structure, tetramer of two alpha and two beta chains. Requires pyridoxal 5'-phosphate as cofactor.

The enzyme catalyses (1S,2R)-1-C-(indol-3-yl)glycerol 3-phosphate + L-serine = D-glyceraldehyde 3-phosphate + L-tryptophan + H2O. It functions in the pathway amino-acid biosynthesis; L-tryptophan biosynthesis; L-tryptophan from chorismate: step 5/5. The beta subunit is responsible for the synthesis of L-tryptophan from indole and L-serine. The polypeptide is Tryptophan synthase beta chain (Caldanaerobacter subterraneus subsp. tengcongensis (strain DSM 15242 / JCM 11007 / NBRC 100824 / MB4) (Thermoanaerobacter tengcongensis)).